The following is a 365-amino-acid chain: U1 snRNP-associated protein usp109 (365 aa).

RRM domains follow at residues 3-79 (TSLW…VVPE), 86-162 (YMLF…SVKS), and 189-259 (TAVY…WARP).

Component of the U1 snRNP complex.

The protein localises to the nucleus. In Schizosaccharomyces pombe (strain 972 / ATCC 24843) (Fission yeast), this protein is U1 snRNP-associated protein usp109 (usp109).